The sequence spans 312 residues: Malate dehydrogenase (312 aa).

NAD(+)-binding positions include 12–17 and aspartate 36; that span reads GAGFTG. Substrate contacts are provided by arginine 87 and arginine 93. NAD(+)-binding positions include asparagine 100 and 123-125; that span reads LTN. Asparagine 125 lines the substrate pocket. Position 149 is a phosphoserine (serine 149). Residue arginine 156 coordinates substrate. Catalysis depends on histidine 180, which acts as the Proton acceptor.

The protein belongs to the LDH/MDH superfamily. MDH type 3 family.

It catalyses the reaction (S)-malate + NAD(+) = oxaloacetate + NADH + H(+). Catalyzes the reversible oxidation of malate to oxaloacetate. This is Malate dehydrogenase from Bacillus cereus (strain ATCC 14579 / DSM 31 / CCUG 7414 / JCM 2152 / NBRC 15305 / NCIMB 9373 / NCTC 2599 / NRRL B-3711).